The primary structure comprises 505 residues: Sodium-coupled neutral amino acid transporter 3 (505 aa).

A disordered region spans residues 27-48; sequence VPTTDTQRTEDTQHCGEGKGFL. Residues 33-43 are compositionally biased toward basic and acidic residues; it reads QRTEDTQHCGE. The N-linked (GlcNAc...) asparagine glycan is linked to Asn-73. The next 5 helical transmembrane spans lie at 82 to 102, 105 to 125, 143 to 163, 186 to 206, and 212 to 232; these read GILG…LFLL, VALL…IVGI, AAAL…LYII, MDGN…LALM, and LGYS…AVIY. Cys-239 and Cys-276 are joined by a disulfide. N-linked (GlcNAc...) asparagine glycans are attached at residues Asn-247 and Asn-251. The chain crosses the membrane as a helical span at residues 288-308; the sequence is AYTIPIMAFAFVCHPEVLPIY. Asn-324 carries N-linked (GlcNAc...) asparagine glycosylation. The next 5 helical transmembrane spans lie at 325–345, 367–387, 409–429, 432–452, and 472–492; these read LSIA…YLTF, ILCV…IVLF, VLIA…APNI, IFGI…PAIF, and ALCF…FIII.

It belongs to the amino acid/polyamine transporter 2 family. Expressed predominantly in liver, moderately expressed in kidney and brain, and barely detectable in heart and muscle. Within liver, expressed in hepatocytes. Not detected in testis. Expressed in cells of the ganglion cell layer, in soma of some cells of the inner nuclear layer (at protein level). Expressed in the inner segments of photoreceptor cells.

It is found in the cell membrane. It localises to the basolateral cell membrane. The catalysed reaction is L-histidine(out) + Na(+)(out) + H(+)(in) = L-histidine(in) + Na(+)(in) + H(+)(out). The enzyme catalyses L-glutamine(out) + Na(+)(out) + H(+)(in) = L-glutamine(in) + Na(+)(in) + H(+)(out). It catalyses the reaction L-asparagine(out) + Na(+)(out) + H(+)(in) = L-asparagine(in) + Na(+)(in) + H(+)(out). Its function is as follows. Symporter that cotransports specific neutral amino acids and sodium ions, coupled to an H(+) antiporter activity. Mainly participates in the glutamate-GABA-glutamine cycle in brain where it transports L-glutamine from astrocytes in the intercellular space for the replenishment of both neurotransmitters glutamate and gamma-aminobutyric acid (GABA) in neurons and also functions as the major influx transporter in ganglion cells mediating the uptake of glutamine. The transport activity is specific for L-glutamine, L-histidine and L-asparagine. The transport is electroneutral coupled to the cotransport of 1 Na(+) and the antiport of 1 H(+). The transport is pH dependent, saturable, Li(+) tolerant and functions in both direction depending on the concentration gradients of its substrates and cotransported ions. Also mediates an amino acid-gated H(+) conductance that is not stoichiometrically coupled to the amino acid transport but which influences the ionic gradients that drive the amino acid transport. In addition, may play a role in nitrogen metabolism, amino acid homeostasis, glucose metabolism and renal ammoniagenesis. This is Sodium-coupled neutral amino acid transporter 3 from Mus musculus (Mouse).